The following is a 144-amino-acid chain: D-aminoacyl-tRNA deacylase (144 aa).

Positions 137–138 (GP) match the Gly-cisPro motif, important for rejection of L-amino acids motif.

This sequence belongs to the DTD family. Homodimer.

The protein resides in the cytoplasm. The catalysed reaction is glycyl-tRNA(Ala) + H2O = tRNA(Ala) + glycine + H(+). It catalyses the reaction a D-aminoacyl-tRNA + H2O = a tRNA + a D-alpha-amino acid + H(+). Its function is as follows. An aminoacyl-tRNA editing enzyme that deacylates mischarged D-aminoacyl-tRNAs. Also deacylates mischarged glycyl-tRNA(Ala), protecting cells against glycine mischarging by AlaRS. Acts via tRNA-based rather than protein-based catalysis; rejects L-amino acids rather than detecting D-amino acids in the active site. By recycling D-aminoacyl-tRNA to D-amino acids and free tRNA molecules, this enzyme counteracts the toxicity associated with the formation of D-aminoacyl-tRNA entities in vivo and helps enforce protein L-homochirality. The protein is D-aminoacyl-tRNA deacylase of Acinetobacter baumannii (strain SDF).